A 296-amino-acid polypeptide reads, in one-letter code: Ribosomal RNA small subunit methyltransferase A (296 aa).

S-adenosyl-L-methionine contacts are provided by Asn31, Leu33, Gly58, Glu79, Asp104, and Asn129.

It belongs to the class I-like SAM-binding methyltransferase superfamily. rRNA adenine N(6)-methyltransferase family. RsmA subfamily.

Its subcellular location is the cytoplasm. It carries out the reaction adenosine(1518)/adenosine(1519) in 16S rRNA + 4 S-adenosyl-L-methionine = N(6)-dimethyladenosine(1518)/N(6)-dimethyladenosine(1519) in 16S rRNA + 4 S-adenosyl-L-homocysteine + 4 H(+). Specifically dimethylates two adjacent adenosines (A1518 and A1519) in the loop of a conserved hairpin near the 3'-end of 16S rRNA in the 30S particle. May play a critical role in biogenesis of 30S subunits. This Shouchella clausii (strain KSM-K16) (Alkalihalobacillus clausii) protein is Ribosomal RNA small subunit methyltransferase A.